The chain runs to 187 residues: UPF0301 protein WIGBR1650 (187 aa).

Belongs to the UPF0301 (AlgH) family.

This is UPF0301 protein WIGBR1650 from Wigglesworthia glossinidia brevipalpis.